The chain runs to 396 residues: 1-deoxy-D-xylulose 5-phosphate reductoisomerase (396 aa).

The NADPH site is built by Thr-10, Gly-11, Ser-12, Ile-13, and Asn-123. Lys-124 lines the 1-deoxy-D-xylulose 5-phosphate pocket. Position 125 (Glu-125) interacts with NADPH. Asp-149 serves as a coordination point for Mn(2+). 1-deoxy-D-xylulose 5-phosphate contacts are provided by Ser-150, Glu-151, Ser-185, and His-208. Glu-151 contacts Mn(2+). Gly-214 is a binding site for NADPH. Residues Ser-221, Asn-226, Lys-227, and Glu-230 each coordinate 1-deoxy-D-xylulose 5-phosphate. Residue Glu-230 coordinates Mn(2+).

Belongs to the DXR family. Requires Mg(2+) as cofactor. Mn(2+) serves as cofactor.

The catalysed reaction is 2-C-methyl-D-erythritol 4-phosphate + NADP(+) = 1-deoxy-D-xylulose 5-phosphate + NADPH + H(+). Its pathway is isoprenoid biosynthesis; isopentenyl diphosphate biosynthesis via DXP pathway; isopentenyl diphosphate from 1-deoxy-D-xylulose 5-phosphate: step 1/6. Functionally, catalyzes the NADPH-dependent rearrangement and reduction of 1-deoxy-D-xylulose-5-phosphate (DXP) to 2-C-methyl-D-erythritol 4-phosphate (MEP). In Shewanella sp. (strain ANA-3), this protein is 1-deoxy-D-xylulose 5-phosphate reductoisomerase.